We begin with the raw amino-acid sequence, 857 residues long: MTNEQLQRKHQSLATLITRIIFLVLGLITIGIFIQSYYFSNKIIKQEVMLTKQQTSALVKSLFNNHLSILQIHHDSNSKNEAIRRFFLDGDDEKLEYYFLSMDQADPTHTPEFRFLTTGEGLLWDDGNAHFYGVNEVLLEKISQSVLFGNNWHFMSLHTLMGLRNMLVRRSPVIDTTTGEVLGQYYISVVLDNNFPLVEMLESGSNSDNIVMLVGDKVISHSLSGNEPYDLDSLLAMRDEPSAFDDCLISQTPIEINSTDTLVSILAIQENSHVASLQRQHYLGLATSVVLMLMLSLAIRSWIQNRVANALESLMAYSRFAGTGEKYERFNGSDILEFAHIGHTLENTFEQLESQRRSFQDLFNFALSPMMVWSESGLLIQMNPAAMKELGIEHASPQDFSNPLFQLFKLKLSPHLKMAAQGATLTGINVPIGEKIFRWNLSPIVVENGISGIIVQGQDITTLIDAEKQSNLARREAEQSAKTRADFLAKMSHEIRTPLNGILGIAQLLKRSVNDAENLKQVDVLCNSGEHLLAVLNDILDFSKIEQGKFNIKKRDFNFYDTLNTLENIYRPICREKGVSFEIHNQIPLDCQLHTDQVRLNQIMFNLISNAVKFTPAGRIEVSFKLEKFARSEHSILSIQVSDTGIGIDESKLESIFEPFVQADSLSTREYGGSGLGLTIVKNLVEMLEGEISVQSELCKGSTFYLSIPVEKGECEEQKTPTNPKPEQLFGQGLKVLLVEDNHTNAFILKAFCQKYQMSVEWVQDGTQALEKLKEHAFDLILMDNQLPKMGGIEATREIRETLKLGTPIYACTADAQESTKQEFLSAGANRVIVKPIKEQELHDELLHFKAHYWVEH.

A run of 2 helical transmembrane segments spans residues 20 to 40 (IIFL…YYFS) and 283 to 303 (LGLA…RSWI). Residues 490–712 (KMSHEIRTPL…TFYLSIPVEK (223 aa)) enclose the Histidine kinase domain. His493 is subject to Phosphohistidine; by autocatalysis. The region spanning 735-850 (KVLLVEDNHT…ELHDELLHFK (116 aa)) is the Response regulatory domain. 4-aspartylphosphate is present on Asp784.

Binds the complex formed by the autoinducer and LuxP.

The protein resides in the cell inner membrane. It catalyses the reaction ATP + protein L-histidine = ADP + protein N-phospho-L-histidine.. Functionally, at low cell density, in absence of autoinducer has a kinase activity, and autophosphorylates on a histidine residue. The phosphoryl group is then transferred to an aspartate residue in the response regulator domain. The phosphoryl group is transferred to LuxU, and ultimately to LuxO. At high cell density, in the presence of autoinducer, the kinase activity is inactivated, and the response regulator domain has a phosphatase activity. The polypeptide is Autoinducer 2 sensor kinase/phosphatase LuxQ (luxQ) (Vibrio vulnificus (strain CMCP6)).